We begin with the raw amino-acid sequence, 82 residues long: Small ribosomal subunit protein uS12 (82 aa).

The residue at position 59 (Asp59) is a 3-methylthioaspartic acid.

It belongs to the universal ribosomal protein uS12 family. As to quaternary structure, part of the 30S ribosomal subunit. Contacts proteins S8 and S17. May interact with IF1 in the 30S initiation complex.

With S4 and S5 plays an important role in translational accuracy. Functionally, interacts with and stabilizes bases of the 16S rRNA that are involved in tRNA selection in the A site and with the mRNA backbone. Located at the interface of the 30S and 50S subunits, it traverses the body of the 30S subunit contacting proteins on the other side and probably holding the rRNA structure together. The combined cluster of proteins S8, S12 and S17 appears to hold together the shoulder and platform of the 30S subunit. The sequence is that of Small ribosomal subunit protein uS12 (rpsL) from Actinobacillus pleuropneumoniae (Haemophilus pleuropneumoniae).